The chain runs to 102 residues: Crustacean hyperglycemic hormones 3 (102 aa).

A signal peptide spans 1 to 22; that stretch reads MIALRLIAVTLVVAMAASTTWA. Cystine bridges form between cysteine 35/cysteine 71, cysteine 51/cysteine 67, and cysteine 54/cysteine 80. The residue at position 100 (valine 100) is a Valine amide.

This sequence belongs to the arthropod CHH/MIH/GIH/VIH hormone family.

It localises to the secreted. Its function is as follows. Hormone found in the sinus gland of isopods and decapods which controls the blood sugar level. Has a secretagogue action over the amylase released from the midgut gland. May act as a stress hormone and may be involved in the control of molting and reproduction. The chain is Crustacean hyperglycemic hormones 3 (CHH3) from Penaeus monodon (Giant tiger prawn).